Consider the following 72-residue polypeptide: uncharacterized protein (72 aa).

This is an uncharacterized protein from Archaeoglobus fulgidus (strain ATCC 49558 / DSM 4304 / JCM 9628 / NBRC 100126 / VC-16).